A 283-amino-acid polypeptide reads, in one-letter code: E3 ubiquitin-protein ligase SGR9, amyloplastic (283 aa).

Residues 1–32 (MEDENTTIIMASLSALSPSHLTNLTHSILSIS) constitute an amyloplast transit peptide. The segment at 214–255 (CVICKEEMSEGRDVCEMPCQHFFHWKCILPWLSKKNTCPFCR) adopts an RING-type; atypical zinc-finger fold.

Auto-ubiquitinated as part of the enzymatic reaction. In terms of tissue distribution, expressed in seedlings, hypocotyls, roots and stems. Present especially in hypocotyl and inflorescence endodermis, as well as in root cap columella, tissues that act as statocytes.

Its subcellular location is the plastid. The protein resides in the amyloplast. The catalysed reaction is S-ubiquitinyl-[E2 ubiquitin-conjugating enzyme]-L-cysteine + [acceptor protein]-L-lysine = [E2 ubiquitin-conjugating enzyme]-L-cysteine + N(6)-ubiquitinyl-[acceptor protein]-L-lysine.. Its pathway is protein modification; protein ubiquitination. Its function is as follows. E3 ubiquitin-protein ligase which accepts ubiquitin from an E2 ubiquitin-conjugating enzyme in the form of a thioester and then directly transfers the ubiquitin to targeted substrates. Modulates amyloplast dynamics and sedimentation in statocytes during inflorescence, hypocotyl and root gravitropism, probably by regulating amyloplast interaction with actin filaments (AFs) in endodermal cells. This Arabidopsis thaliana (Mouse-ear cress) protein is E3 ubiquitin-protein ligase SGR9, amyloplastic (SGR9).